The sequence spans 947 residues: MPSLSLSKLLRVGEGRMVKRLKHIAEHVESLSPDVEGLTDEQLKAKTTEFRERYAAGETLDELLPEAFSVAREASWRVIDQKHFHVQIMGGAALHFGNVAEMKTGEGKTLTCVLPAYLNAIAGDGVHVVTVNDYLAKRDSEWMGRVHRALGLETSVILSGMTPAERRVAYAADITYGTNNEFGFDYLRDNMTHSLDDLVQRGHAFAIVDEVDSILIDEARTPLIISGPADGSSKWYSEFARIAPLLKKDVHYEVDIRKRTIGVHEAGVELVEDQLGIDNLYEAANSPLVSYLNNAIKAKELYTKDKDYIVRDGEVIIVDEFTGRVLVGRRYNEGMHQAIEAKEKVEIKAENQTLATITLQNYFRLYDKLSGMTGTAETEAAELHQTYTLGVIPIPTNRPMVRVDNGDLIYKTEEAKFDAVVDDVVERHENGQPVLIGTTSVERSEYLSKQFTKRGVAHNVLNAKFHEKEATIIAEAGRSGAVTVATNMAGRGTDVVLGGNPDIIADIALRKKGLDPVTTPDEYEAAWDAVLDEVKAEVKADAEKVRDAGGLYVLGTERHESRRIDNQLRGRSGRQGDPGESRFYLSLGDELMRRFNGSALESIMTRLNLPDDVPIEAKMVSKAIKSAQTQVEQQNFEIRKNVLKYDEVMNQQRTVIYKERRQILEGEDMEGQVEQMITDVVTAYVDGATAEGYVEDWDLEQLWTALKTLYPVGIDHKTLAGEDGAGINSDLSRDDLRTALLEDAHAAYKKREAEIDAIAGENGMRELERRVFLSVLDRKWREHLYEMDYLKEGIGLRAMAQRDPLVEYQREGYDMFIGMLDGLKEESVGFLFNLQVEAAPAQPASGISVTAGSAAAASATAPKPLPTQEAAARTTGTAAPTALRAKGLDDEGPSRLTYTGPDEDGKAKATRDSAADSGDGAASRRERREAARTQSKSNRAPKSKRKR.

Residues Gln87, 105–109, and Asp494 contribute to the ATP site; that span reads GEGKT. A disordered region spans residues 860–947; the sequence is TAPKPLPTQE…NRAPKSKRKR (88 aa). Residues 870–885 show a composition bias toward low complexity; it reads AAARTTGTAAPTALRA. 2 stretches are compositionally biased toward basic and acidic residues: residues 903 to 914 and 922 to 931; these read EDGKAKATRDSA and ASRRERREAA.

Belongs to the SecA family. Monomer and homodimer. Part of the essential Sec protein translocation apparatus which comprises SecA, SecYEG and auxiliary proteins SecDF. Other proteins may also be involved.

It is found in the cell membrane. It localises to the cytoplasm. It catalyses the reaction ATP + H2O + cellular proteinSide 1 = ADP + phosphate + cellular proteinSide 2.. Its function is as follows. Part of the Sec protein translocase complex. Interacts with the SecYEG preprotein conducting channel. Has a central role in coupling the hydrolysis of ATP to the transfer of proteins into and across the cell membrane, serving as an ATP-driven molecular motor driving the stepwise translocation of polypeptide chains across the membrane. The sequence is that of Protein translocase subunit SecA from Rhodococcus erythropolis (strain PR4 / NBRC 100887).